The sequence spans 96 residues: MSTVNVLRYSALGLGLFFGFRNDMILKCNAKKKEEQAQYEEKLKLVEEAKKEYAKLHPVVTPKDVPANASFNLEDPNIDFERVILNAVESLKEAST.

Position 2 is an N-acetylserine (serine 2).

The protein belongs to the ATPase e subunit family. In terms of assembly, F-type ATPases have 2 components, CF(1) - the catalytic core - and CF(0) - the membrane proton channel. In yeast, the dimeric form of ATP synthase consists of 17 polypeptides: alpha, beta, gamma, delta, epsilon, 4 (B), 5 (OSCP), 6 (A), 8, 9 (C), d, E (Tim11), f, g, h, i/j and k.

The protein resides in the mitochondrion. It is found in the mitochondrion inner membrane. Its function is as follows. Mitochondrial membrane ATP synthase (F(1)F(0) ATP synthase or Complex V) produces ATP from ADP in the presence of a proton gradient across the membrane which is generated by electron transport complexes of the respiratory chain. F-type ATPases consist of two structural domains, F(1) - containing the extramembraneous catalytic core, and F(0) - containing the membrane proton channel, linked together by a central stalk and a peripheral stalk. During catalysis, ATP synthesis in the catalytic domain of F(1) is coupled via a rotary mechanism of the central stalk subunits to proton translocation. Part of the complex F(0) domain. Minor subunit located with subunit a in the membrane. In Saccharomyces cerevisiae (strain ATCC 204508 / S288c) (Baker's yeast), this protein is ATP synthase subunit e, mitochondrial (TIM11).